We begin with the raw amino-acid sequence, 244 residues long: Trypsin (244 aa).

The signal sequence occupies residues 1 to 15 (MKFLVILVLLGAAVA). Positions 16 to 21 (FEDDDK) are cleaved as a propeptide — activation peptide. Residues 22–242 (IVGGFTCAKN…FVTWIQSTIS (221 aa)) enclose the Peptidase S1 domain. Intrachain disulfides connect cysteine 28–cysteine 158, cysteine 46–cysteine 62, cysteine 130–cysteine 231, cysteine 137–cysteine 204, cysteine 169–cysteine 183, and cysteine 194–cysteine 218. Catalysis depends on histidine 61, which acts as the Charge relay system. The Ca(2+) site is built by glutamate 73, asparagine 75, and glutamate 83. Aspartate 105 functions as the Charge relay system in the catalytic mechanism. Serine 198 serves as the catalytic Charge relay system.

This sequence belongs to the peptidase S1 family. Requires Ca(2+) as cofactor.

It localises to the secreted. Its subcellular location is the extracellular space. The enzyme catalyses Preferential cleavage: Arg-|-Xaa, Lys-|-Xaa.. The sequence is that of Trypsin from Xenopus laevis (African clawed frog).